A 132-amino-acid polypeptide reads, in one-letter code: MRRARTAFTYEQLVALENKFKTSRYLSVVERLNLAIQLQLSETQVKIWFQNRRTKWKKHNPGQDANTPQTPPSSDETQIQPILPANPITSFSSLLLPPIISPANSAVLQGTSIPLTLFNLNQILMPQNVGFN.

A DNA-binding region (homeobox) is located at residues 1–60; sequence MRRARTAFTYEQLVALENKFKTSRYLSVVERLNLAIQLQLSETQVKIWFQNRRTKWKKHN. The tract at residues 56 to 80 is disordered; that stretch reads WKKHNPGQDANTPQTPPSSDETQIQ. Residues 63-80 show a composition bias toward polar residues; that stretch reads QDANTPQTPPSSDETQIQ.

The protein localises to the nucleus. The polypeptide is Homeobox protein ceh-1 (ceh-1) (Caenorhabditis elegans).